The chain runs to 500 residues: Probable cytosol aminopeptidase (500 aa).

Mn(2+)-binding residues include lysine 264 and aspartate 269. Lysine 276 is a catalytic residue. Positions 287, 346, and 348 each coordinate Mn(2+). Arginine 350 is a catalytic residue.

Belongs to the peptidase M17 family. Mn(2+) is required as a cofactor.

The protein resides in the cytoplasm. The enzyme catalyses Release of an N-terminal amino acid, Xaa-|-Yaa-, in which Xaa is preferably Leu, but may be other amino acids including Pro although not Arg or Lys, and Yaa may be Pro. Amino acid amides and methyl esters are also readily hydrolyzed, but rates on arylamides are exceedingly low.. It carries out the reaction Release of an N-terminal amino acid, preferentially leucine, but not glutamic or aspartic acids.. In terms of biological role, presumably involved in the processing and regular turnover of intracellular proteins. Catalyzes the removal of unsubstituted N-terminal amino acids from various peptides. In Afipia carboxidovorans (strain ATCC 49405 / DSM 1227 / KCTC 32145 / OM5) (Oligotropha carboxidovorans), this protein is Probable cytosol aminopeptidase.